Consider the following 265-residue polypeptide: Palmitoyltransferase ZDHHC21 (265 aa).

At 1-16 (MGLRIHFVVDPHGWCC) the chain is on the cytoplasmic side. Residues 17 to 37 (MGLIVFVWLYNIVLIPKIVLF) traverse the membrane as a helical segment. Residues 38 to 44 (PHYEEGH) are Extracellular-facing. Residues 45 to 65 (IPGILIIIFYGISIFCLVALV) traverse the membrane as a helical segment. At 66-133 (RASITDPGRL…NNCVGEDNHW (68 aa)) the chain is on the cytoplasmic side. Positions 90–140 (ELCNKCNLMRPKRSHHCSRCGHCVRRMDHHCPWINNCVGEDNHWLFLQLCF) constitute a DHHC domain. C120 functions as the S-palmitoyl cysteine intermediate in the catalytic mechanism. Residues 134 to 154 (LFLQLCFYTELLTCYALMFSF) traverse the membrane as a helical segment. Residues 155–185 (CHYYYFLPLKKRNLDLFVFRHELAIMRLAAF) are Extracellular-facing. Residues 186-206 (MGITMLVGITGLFYTQLIGII) traverse the membrane as a helical segment. Residues 207-265 (TDTTSIEKMSNCCEDISRPRKPWQQTFSEVFGTRWKILWFIPFRQRQPLRVPYHFANHV) are Cytoplasmic-facing.

The protein belongs to the DHHC palmitoyltransferase family. Widely expressed.

Its subcellular location is the golgi apparatus membrane. It localises to the golgi apparatus. It is found in the cis-Golgi network membrane. The protein resides in the cell membrane. It carries out the reaction L-cysteinyl-[protein] + hexadecanoyl-CoA = S-hexadecanoyl-L-cysteinyl-[protein] + CoA. Its function is as follows. Palmitoyltransferase that catalyzes the addition of palmitate onto various protein substrates. Palmitoylates sex steroid hormone receptors, including ESR1, PGR and AR, thereby regulating their targeting to the plasma membrane. This affects rapid intracellular signaling by sex hormones via ERK and AKT kinases and the generation of cAMP, but does not affect that mediated by their nuclear receptor. Palmitoylates FYN, regulates its localization in hair follicles and plays a key role in epidermal homeostasis and hair follicle differentiation. Through the palmitoylation of PLCB1 and the regulation of PLCB1 downstream signaling may indirectly regulate the function of the endothelial barrier and the adhesion of leukocytes to the endothelium. Also has a palmitoyltransferase activity toward ADRA1D, positively regulating its activity and expression and may thereby play a role in vascular contraction. May also palmitoylate eNOS and LCK. The sequence is that of Palmitoyltransferase ZDHHC21 from Homo sapiens (Human).